The primary structure comprises 439 residues: Glutamate--tRNA ligase 2 (439 aa).

Residues 6 to 16 (PSPTGDMHIGN) carry the 'HIGH' region motif. The 'KMSKS' region motif lies at 232 to 236 (KMSKR). Lys-235 is an ATP binding site.

This sequence belongs to the class-I aminoacyl-tRNA synthetase family. Glutamate--tRNA ligase type 1 subfamily. As to quaternary structure, monomer.

Its subcellular location is the cytoplasm. The enzyme catalyses tRNA(Glu) + L-glutamate + ATP = L-glutamyl-tRNA(Glu) + AMP + diphosphate. Functionally, catalyzes the attachment of glutamate to tRNA(Glu) in a two-step reaction: glutamate is first activated by ATP to form Glu-AMP and then transferred to the acceptor end of tRNA(Glu). The protein is Glutamate--tRNA ligase 2 of Helicobacter pylori (strain HPAG1).